The primary structure comprises 160 residues: SsrA-binding protein (160 aa).

This sequence belongs to the SmpB family.

The protein localises to the cytoplasm. In terms of biological role, required for rescue of stalled ribosomes mediated by trans-translation. Binds to transfer-messenger RNA (tmRNA), required for stable association of tmRNA with ribosomes. tmRNA and SmpB together mimic tRNA shape, replacing the anticodon stem-loop with SmpB. tmRNA is encoded by the ssrA gene; the 2 termini fold to resemble tRNA(Ala) and it encodes a 'tag peptide', a short internal open reading frame. During trans-translation Ala-aminoacylated tmRNA acts like a tRNA, entering the A-site of stalled ribosomes, displacing the stalled mRNA. The ribosome then switches to translate the ORF on the tmRNA; the nascent peptide is terminated with the 'tag peptide' encoded by the tmRNA and targeted for degradation. The ribosome is freed to recommence translation, which seems to be the essential function of trans-translation. The protein is SsrA-binding protein of Mycobacterium bovis (strain ATCC BAA-935 / AF2122/97).